A 306-amino-acid polypeptide reads, in one-letter code: Agmatinase (306 aa).

The Mn(2+) site is built by H126, D149, H151, D153, D230, and D232.

The protein belongs to the arginase family. Agmatinase subfamily. Requires Mn(2+) as cofactor.

It catalyses the reaction agmatine + H2O = urea + putrescine. The protein operates within amine and polyamine biosynthesis; putrescine biosynthesis via agmatine pathway; putrescine from agmatine: step 1/1. Catalyzes the formation of putrescine from agmatine. This Escherichia coli O9:H4 (strain HS) protein is Agmatinase.